Consider the following 175-residue polypeptide: Co-chaperone protein HscB homolog (175 aa).

A J domain is found at 2–74 (NYFQLFNIEV…LQRAEYILVQ (73 aa)).

The protein belongs to the HscB family. Interacts with HscA and stimulates its ATPase activity.

Co-chaperone involved in the maturation of iron-sulfur cluster-containing proteins. Seems to help targeting proteins to be folded toward HscA. The chain is Co-chaperone protein HscB homolog from Colwellia psychrerythraea (strain 34H / ATCC BAA-681) (Vibrio psychroerythus).